We begin with the raw amino-acid sequence, 303 residues long: Taste receptor type 2 member 2 (303 aa).

Residues 1–10 are Extracellular-facing; the sequence is MALSFSAILH. The helical transmembrane segment at 11-31 threads the bilayer; that stretch reads IIMMSAEFFTGITVNGFLIIV. Residues 32 to 56 are Cytoplasmic-facing; it reads NCNELIKHRKLMPIQILLMCIGMSR. The helical transmembrane segment at 57 to 77 threads the bilayer; the sequence is FGLQMVLMVQSFFSVFFPLLY. At 78 to 79 the chain is on the extracellular side; it reads VK. A helical transmembrane segment spans residues 80 to 100; that stretch reads IIYGAAMMFLWMFFSSISLWF. Over 101–102 the chain is Cytoplasmic; sequence AT. Residues 103–123 traverse the membrane as a helical segment; the sequence is CLSVFYCLKISGFTQSCFLWL. Over 124 to 129 the chain is Extracellular; it reads KFRIPK. A helical membrane pass occupies residues 130–150; sequence LIPWLLLGSVLASVSIASVCI. The Cytoplasmic portion of the chain corresponds to 151–185; the sequence is EVDYAKNVEEDALRNTTLKKSKTKIKKISEVLLVN. A helical membrane pass occupies residues 186–206; that stretch reads LALIFPLAIFVMCTSMLLISL. Over 207-234 the chain is Extracellular; it reads YKHTHRMQHGSHGFRNANTEAHINALKT. A helical transmembrane segment spans residues 235–255; the sequence is VITFFCFFISYFAAFMTNMTF. Over 256–277 the chain is Cytoplasmic; the sequence is SLPYRSHQFFMLKDIMAAYPSG.

This sequence belongs to the G-protein coupled receptor T2R family.

The protein localises to the cell membrane. In terms of biological role, bitter taste receptor that detects natural and synthetic bitter compounds. The sequence is that of Taste receptor type 2 member 2 from Homo sapiens (Human).